Consider the following 534-residue polypeptide: ATP synthase subunit alpha (534 aa).

170–177 (GDRQTGKT) is a binding site for ATP. The tract at residues 505 to 534 (HEDARVKSETAQAAGKDKDEKAAATAGAGK) is disordered.

The protein belongs to the ATPase alpha/beta chains family. F-type ATPases have 2 components, CF(1) - the catalytic core - and CF(0) - the membrane proton channel. CF(1) has five subunits: alpha(3), beta(3), gamma(1), delta(1), epsilon(1). CF(0) has three main subunits: a(1), b(2) and c(9-12). The alpha and beta chains form an alternating ring which encloses part of the gamma chain. CF(1) is attached to CF(0) by a central stalk formed by the gamma and epsilon chains, while a peripheral stalk is formed by the delta and b chains.

It is found in the cell inner membrane. It carries out the reaction ATP + H2O + 4 H(+)(in) = ADP + phosphate + 5 H(+)(out). Produces ATP from ADP in the presence of a proton gradient across the membrane. The alpha chain is a regulatory subunit. In Acidobacterium capsulatum (strain ATCC 51196 / DSM 11244 / BCRC 80197 / JCM 7670 / NBRC 15755 / NCIMB 13165 / 161), this protein is ATP synthase subunit alpha.